The following is a 368-amino-acid chain: Peptide chain release factor 2 (368 aa).

The residue at position 250 (Gln250) is an N5-methylglutamine.

This sequence belongs to the prokaryotic/mitochondrial release factor family. In terms of processing, methylated by PrmC. Methylation increases the termination efficiency of RF2.

Its subcellular location is the cytoplasm. Its function is as follows. Peptide chain release factor 2 directs the termination of translation in response to the peptide chain termination codons UGA and UAA. The polypeptide is Peptide chain release factor 2 (Rickettsia bellii (strain RML369-C)).